A 356-amino-acid chain; its full sequence is Phospho-N-acetylmuramoyl-pentapeptide-transferase (356 aa).

Transmembrane regions (helical) follow at residues 25–45, 70–90, 93–113, 138–158, 164–184, 195–215, 235–255, 258–278, 284–304, and 333–353; these read TVAAMLTSGLIVFLFGPSIIA, GTPTMGGLMILTGIVVSAFLW, LSNIYFWVSLFVMLSFGMIGF, FLIAIIAAFVLLQVGSSGLAL, YFINLSWFFLPFSAFVIVGTG, GLAIVPVMVAALSFALIAYLS, LAVLLGAVVGAGLGFLWFNAP, AIFMGDTGSLALGGLLGIVAV, IVLALIGGLFVLEGFSVVIQV, and QVVIRFWIISIVLALVGLSTL.

Belongs to the glycosyltransferase 4 family. MraY subfamily. The cofactor is Mg(2+).

The protein localises to the cell inner membrane. It catalyses the reaction UDP-N-acetyl-alpha-D-muramoyl-L-alanyl-gamma-D-glutamyl-meso-2,6-diaminopimeloyl-D-alanyl-D-alanine + di-trans,octa-cis-undecaprenyl phosphate = di-trans,octa-cis-undecaprenyl diphospho-N-acetyl-alpha-D-muramoyl-L-alanyl-D-glutamyl-meso-2,6-diaminopimeloyl-D-alanyl-D-alanine + UMP. Its pathway is cell wall biogenesis; peptidoglycan biosynthesis. Its function is as follows. Catalyzes the initial step of the lipid cycle reactions in the biosynthesis of the cell wall peptidoglycan: transfers peptidoglycan precursor phospho-MurNAc-pentapeptide from UDP-MurNAc-pentapeptide onto the lipid carrier undecaprenyl phosphate, yielding undecaprenyl-pyrophosphoryl-MurNAc-pentapeptide, known as lipid I. The chain is Phospho-N-acetylmuramoyl-pentapeptide-transferase from Bartonella quintana (strain Toulouse) (Rochalimaea quintana).